The sequence spans 276 residues: Rhomboid protease GlpG (276 aa).

6 helical membrane passes run G94–L114, A142–G162, I169–Q189, F192–W212, L229–I249, and G252–G272. S201 functions as the Nucleophile in the catalytic mechanism. Residue H254 is part of the active site.

This sequence belongs to the peptidase S54 family.

Its subcellular location is the cell inner membrane. It carries out the reaction Cleaves type-1 transmembrane domains using a catalytic dyad composed of serine and histidine that are contributed by different transmembrane domains.. Functionally, rhomboid-type serine protease that catalyzes intramembrane proteolysis. This Klebsiella pneumoniae subsp. pneumoniae (strain ATCC 700721 / MGH 78578) protein is Rhomboid protease GlpG.